The following is an 81-amino-acid chain: Cytotoxin 1a (81 aa).

Residues 1 to 21 (MKTLLLTLVVVTIVCLDLGYT) form the signal peptide. Cystine bridges form between cysteine 24–cysteine 42, cysteine 35–cysteine 59, cysteine 63–cysteine 74, and cysteine 75–cysteine 80.

This sequence belongs to the three-finger toxin family. Short-chain subfamily. Type IA cytotoxin sub-subfamily. Monomer in solution; Homodimer and oligomer in the presence of negatively charged lipids forming a pore with a size ranging between 20 and 30 Angstroms. Expressed by the venom gland.

It localises to the secreted. It is found in the target cell membrane. Shows cytolytic activity on many different cells by forming pore in lipid membranes. In vivo, increases heart rate or kills the animal by cardiac arrest. In addition, it binds to heparin with high affinity, interacts with Kv channel-interacting protein 1 (KCNIP1) in a calcium-independent manner, and binds to integrin alpha-V/beta-3 (ITGAV/ITGB3) with moderate affinity. This chain is Cytotoxin 1a, found in Naja atra (Chinese cobra).